We begin with the raw amino-acid sequence, 437 residues long: ATP-dependent RNA helicase RhlB (437 aa).

The Q motif motif lies at 9–37 (KKFADFPLHKEVQQALNEVGFEFCTPIQA). Residues 40 to 219 (LPILLAKKDI…YDHMNEPEKV (180 aa)) enclose the Helicase ATP-binding domain. An ATP-binding site is contributed by 53-60 (AQTGTGKT). The DEAD box signature appears at 165–168 (DEAD). Residues 243–390 (KMPLLLSLLE…VTSYDSEALL (148 aa)) enclose the Helicase C-terminal domain. The segment at 394 to 437 (PAPKRIHRKPSSHSRNSRDRSGSRPQGGHRGNAPRRHDKTRRHS) is disordered. Over residues 425–437 (NAPRRHDKTRRHS) the composition is skewed to basic residues.

The protein belongs to the DEAD box helicase family. RhlB subfamily. Component of the RNA degradosome, which is a multiprotein complex involved in RNA processing and mRNA degradation.

Its subcellular location is the cytoplasm. It catalyses the reaction ATP + H2O = ADP + phosphate + H(+). Its function is as follows. DEAD-box RNA helicase involved in RNA degradation. Has RNA-dependent ATPase activity and unwinds double-stranded RNA. The protein is ATP-dependent RNA helicase RhlB of Shewanella piezotolerans (strain WP3 / JCM 13877).